The following is a 213-amino-acid chain: Protein Syd (213 aa).

Belongs to the Syd family.

It localises to the cell inner membrane. Its function is as follows. Interacts with the SecY protein in vivo. May bind preferentially to an uncomplexed state of SecY, thus functioning either as a chelating agent for excess SecY in the cell or as a regulatory factor that negatively controls the translocase function. The polypeptide is Protein Syd (Shewanella pealeana (strain ATCC 700345 / ANG-SQ1)).